The following is a 62-amino-acid chain: Translational regulator CsrA (62 aa).

This sequence belongs to the CsrA/RsmA family. Homodimer; the beta-strands of each monomer intercalate to form a hydrophobic core, while the alpha-helices form wings that extend away from the core.

Its subcellular location is the cytoplasm. A key translational regulator that binds mRNA to regulate translation initiation and/or mRNA stability. Mediates global changes in gene expression, shifting from rapid growth to stress survival by linking envelope stress, the stringent response and the catabolite repression systems. Usually binds in the 5'-UTR; binding at or near the Shine-Dalgarno sequence prevents ribosome-binding, repressing translation, binding elsewhere in the 5'-UTR can activate translation and/or stabilize the mRNA. Its function is antagonized by small RNA(s). In Pasteurella multocida (strain Pm70), this protein is Translational regulator CsrA.